The following is a 132-amino-acid chain: D-ribose pyranase (132 aa).

Histidine 20 acts as the Proton donor in catalysis. Substrate-binding positions include aspartate 28, histidine 99, and 121–123 (YAN).

The protein belongs to the RbsD / FucU family. RbsD subfamily. As to quaternary structure, homodecamer.

The protein localises to the cytoplasm. It carries out the reaction beta-D-ribopyranose = beta-D-ribofuranose. It participates in carbohydrate metabolism; D-ribose degradation; D-ribose 5-phosphate from beta-D-ribopyranose: step 1/2. In terms of biological role, catalyzes the interconversion of beta-pyran and beta-furan forms of D-ribose. The sequence is that of D-ribose pyranase from Variovorax paradoxus (strain S110).